The sequence spans 510 residues: ATP synthase subunit alpha (510 aa).

169–176 (GDRQTGKT) is a binding site for ATP.

It belongs to the ATPase alpha/beta chains family. In terms of assembly, F-type ATPases have 2 components, CF(1) - the catalytic core - and CF(0) - the membrane proton channel. CF(1) has five subunits: alpha(3), beta(3), gamma(1), delta(1), epsilon(1). CF(0) has three main subunits: a(1), b(2) and c(9-12). The alpha and beta chains form an alternating ring which encloses part of the gamma chain. CF(1) is attached to CF(0) by a central stalk formed by the gamma and epsilon chains, while a peripheral stalk is formed by the delta and b chains.

The protein resides in the cell inner membrane. The enzyme catalyses ATP + H2O + 4 H(+)(in) = ADP + phosphate + 5 H(+)(out). Produces ATP from ADP in the presence of a proton gradient across the membrane. The alpha chain is a regulatory subunit. This Anaeromyxobacter dehalogenans (strain 2CP-1 / ATCC BAA-258) protein is ATP synthase subunit alpha.